Here is a 360-residue protein sequence, read N- to C-terminus: Probable dual-specificity RNA methyltransferase RlmN (360 aa).

E91 functions as the Proton acceptor in the catalytic mechanism. The region spanning 97–335 is the Radical SAM core domain; sequence QHYGQSVCVT…CVVRQEHGTD (239 aa). Residues C104 and C340 are joined by a disulfide bond. 3 residues coordinate [4Fe-4S] cluster: C111, C115, and C118. S-adenosyl-L-methionine-binding positions include 163–164, S195, 218–220, and N296; these read GE and SLH. Residue C340 is the S-methylcysteine intermediate of the active site.

The protein belongs to the radical SAM superfamily. RlmN family. It depends on [4Fe-4S] cluster as a cofactor.

The protein resides in the cytoplasm. The catalysed reaction is adenosine(2503) in 23S rRNA + 2 reduced [2Fe-2S]-[ferredoxin] + 2 S-adenosyl-L-methionine = 2-methyladenosine(2503) in 23S rRNA + 5'-deoxyadenosine + L-methionine + 2 oxidized [2Fe-2S]-[ferredoxin] + S-adenosyl-L-homocysteine. The enzyme catalyses adenosine(37) in tRNA + 2 reduced [2Fe-2S]-[ferredoxin] + 2 S-adenosyl-L-methionine = 2-methyladenosine(37) in tRNA + 5'-deoxyadenosine + L-methionine + 2 oxidized [2Fe-2S]-[ferredoxin] + S-adenosyl-L-homocysteine. Specifically methylates position 2 of adenine 2503 in 23S rRNA and position 2 of adenine 37 in tRNAs. The polypeptide is Probable dual-specificity RNA methyltransferase RlmN (Streptococcus equi subsp. zooepidemicus (strain MGCS10565)).